Reading from the N-terminus, the 583-residue chain is Sensor protein SrrB (583 aa).

The Cytoplasmic portion of the chain corresponds to 1-11 (MMSRLNSVVIK). Residues 12-32 (LWLTIILIVTTVLILLSIALI) traverse the membrane as a helical segment. At 33-174 (TFMQYYFTQE…SIEDTNNAIT (142 aa)) the chain is on the extracellular side. A helical transmembrane segment spans residues 175 to 195 (IITIITAVIFLTITTVFAFFL). Residues 196–583 (SSRITKPLRR…TFIIKLPKPE (388 aa)) lie on the Cytoplasmic side of the membrane. In terms of domain architecture, HAMP spans 197–249 (SRITKPLRRLRDQATRVSEGDYSYKPSVTTKDEIGQLSQAFNQMSTEIEEHVD). Positions 366-583 (NVSHELRTPI…TFIIKLPKPE (218 aa)) constitute a Histidine kinase domain. H369 carries the phosphohistidine; by autocatalysis modification.

The protein resides in the cell membrane. The catalysed reaction is ATP + protein L-histidine = ADP + protein N-phospho-L-histidine.. Member of the two-component regulatory system SrrA/SrrB, which is involved in the global regulation of staphylococcal virulence factors in response to environmental oxygen levels as well as biofilm formation. Also plays an essential role in host-derived nitric oxide resistance by regulating hmp/flavohemoglobin, an enzyme that detoxifies nitric oxide by converting it to nitrate. Functions as a sensor protein kinase which is autophosphorylated at a histidine residue and transfers its phosphate group to SrrA. In turn, SrrA binds to the upstream promoter regions of the target genes to positively and negatively regulate their expression. The protein is Sensor protein SrrB (srrB) of Staphylococcus aureus.